Consider the following 968-residue polypeptide: RNA polymerase-associated protein RapA (968 aa).

A Helicase ATP-binding domain is found at 163 to 332 (EVGQRFAPRV…FARLRLLDPD (170 aa)). Residue 176–183 (DEVGLGKT) participates in ATP binding. The DEAH box motif lies at 278 to 281 (DEAH). A Helicase C-terminal domain is found at 491–678 (RVDWLIDFLK…GTKARYQELK (188 aa)).

This sequence belongs to the SNF2/RAD54 helicase family. RapA subfamily. As to quaternary structure, interacts with the RNAP. Has a higher affinity for the core RNAP than for the holoenzyme. Its ATPase activity is stimulated by binding to RNAP.

Functionally, transcription regulator that activates transcription by stimulating RNA polymerase (RNAP) recycling in case of stress conditions such as supercoiled DNA or high salt concentrations. Probably acts by releasing the RNAP, when it is trapped or immobilized on tightly supercoiled DNA. Does not activate transcription on linear DNA. Probably not involved in DNA repair. This Shewanella pealeana (strain ATCC 700345 / ANG-SQ1) protein is RNA polymerase-associated protein RapA.